Reading from the N-terminus, the 516-residue chain is uncharacterized protein (516 aa).

The signal sequence occupies residues 1–17 (MSVWVALALLGMCVSCT). Disordered stretches follow at residues 29 to 197 (KEPP…EVPR) and 296 to 426 (RTVS…RDHL). Residues 71-85 (RVPESSQEREQKPES) show a composition bias toward basic and acidic residues. Residues 122-144 (VAPPAPPAPTAPRPHRPSPPPVS) show a composition bias toward pro residues. Residues 145–155 (PSASKPKQRAV) are compositionally biased toward low complexity. Residues 351–367 (KAQHGTPRPDEKKDREP) are compositionally biased toward basic and acidic residues. The segment covering 394-406 (SPASQPSAPSAAP) has biased composition (low complexity). The span at 415-426 (AHKEGQEKRDHL) shows a compositional bias: basic and acidic residues.

This is an uncharacterized protein from Treponema pallidum (strain Nichols).